The chain runs to 286 residues: Putative L-ribulose-5-phosphate 3-epimerase SgbU (286 aa).

It belongs to the L-ribulose-5-phosphate 3-epimerase family.

The catalysed reaction is L-ribulose 5-phosphate = L-xylulose 5-phosphate. Catalyzes the isomerization of L-xylulose-5-phosphate to L-ribulose-5-phosphate (Potential). May be involved in the utilization of 2,3-diketo-L-gulonate. The protein is Putative L-ribulose-5-phosphate 3-epimerase SgbU (sgbU) of Escherichia coli (strain K12).